The following is a 136-amino-acid chain: Histone H3 (136 aa).

The disordered stretch occupies residues 1–45 (MARTKQTARKSTGGKAPRKQLATKAARKSAPATGGVKKPHRYRPG). Lys-5 is subject to N6,N6,N6-trimethyllysine; alternate. Lys-5 carries the N6,N6-dimethyllysine; alternate modification. Lys-5 and Lys-10 each carry N6-methyllysine; alternate. Residue Lys-10 is modified to N6-acetyllysine; alternate. The residue at position 11 (Ser-11) is a Phosphoserine. At Lys-15 the chain carries N6,N6-dimethyllysine; alternate. N6-methyllysine; alternate occurs at positions 15, 19, 24, 28, and 37. Lys-15, Lys-19, Lys-24, Lys-28, and Lys-37 each carry N6-acetyllysine; alternate. Lys-28 and Lys-37 each carry N6,N6,N6-trimethyllysine; alternate. 2 positions are modified to N6,N6-dimethyllysine; alternate: Lys-28 and Lys-37. Residues Lys-57 and Lys-65 each carry the N6-acetyllysine modification. Residue Lys-80 is modified to N6,N6,N6-trimethyllysine; alternate. N6,N6-dimethyllysine; alternate is present on Lys-80. Lys-80 is subject to N6-methyllysine; alternate.

It belongs to the histone H3 family. As to quaternary structure, the nucleosome is a histone octamer containing two molecules each of H2A, H2B, H3 and H4 assembled in one H3-H4 heterotetramer and two H2A-H2B heterodimers. The octamer wraps approximately 147 bp of DNA. Phosphorylated to form H3S10ph. H3S10ph promotes subsequent H3K14ac formation and is required for transcriptional activation through TBP recruitment to the promoters. In terms of processing, mono-, di- and trimethylated by the COMPASS complex to form H3K4me1/2/3. H3K4me activates gene expression by regulating transcription elongation and plays a role in telomere length maintenance. H3K4me enrichment correlates with transcription levels, and occurs in a 5' to 3' gradient with H3K4me3 enrichment at the 5'-end of genes, shifting to H3K4me2 and then H3K4me1. Methylated by SET2 to form H3K36me. H3K36me represses gene expression. Methylated by DOT1 to form H3K79me. H3K79me is required for association of SIR proteins with telomeric regions and for telomeric silencing. The COMPASS-mediated formation of H3K4me2/3 and the DOT1-mediated formation of H3K79me require H2BK123ub1. Post-translationally, acetylation of histone H3 leads to transcriptional activation. H3K14ac formation by GCN5 is promoted by H3S10ph. H3K14ac can also be formed by ESA1. H3K56ac formation occurs predominantly in newly synthesized H3 molecules during G1, S and G2/M of the cell cycle and may be involved in DNA repair.

It is found in the nucleus. It localises to the chromosome. In terms of biological role, core component of nucleosome. Nucleosomes wrap and compact DNA into chromatin, limiting DNA accessibility to the cellular machineries which require DNA as a template. Histones thereby play a central role in transcription regulation, DNA repair, DNA replication and chromosomal stability. DNA accessibility is regulated via a complex set of post-translational modifications of histones, also called histone code, and nucleosome remodeling. This Mortierella alpina (Oleaginous fungus) protein is Histone H3 (H3.1).